Reading from the N-terminus, the 139-residue chain is Ribulose bisphosphate carboxylase small subunit (139 aa).

This sequence belongs to the RuBisCO small chain family. In terms of assembly, heterohexadecamer of 8 large and 8 small subunits.

The protein localises to the plastid. It localises to the chloroplast. In terms of biological role, ruBisCO catalyzes two reactions: the carboxylation of D-ribulose 1,5-bisphosphate, the primary event in carbon dioxide fixation, as well as the oxidative fragmentation of the pentose substrate in the photorespiration process. Both reactions occur simultaneously and in competition at the same active site. Although the small subunit is not catalytic it is essential for maximal activity. The protein is Ribulose bisphosphate carboxylase small subunit of Detonula confervacea (Marine diatom).